The primary structure comprises 155 residues: Small ribosomal subunit protein uS9 (155 aa).

Belongs to the universal ribosomal protein uS9 family.

In Rhizobium leguminosarum bv. trifolii (strain WSM2304), this protein is Small ribosomal subunit protein uS9.